The sequence spans 484 residues: Mitochondrial metal transporter 2 (484 aa).

The N-terminal 56 residues, methionine 1–asparagine 56, are a transit peptide targeting the mitochondrion. Polar residues predominate over residues serine 73–glutamine 82. Residues serine 73–asparagine 114 form a disordered region. Positions asparagine 83–lysine 92 are enriched in basic and acidic residues. 5 helical membrane-spanning segments follow: residues isoleucine 132–isoleucine 152, alanine 158–phenylalanine 178, isoleucine 209–valine 229, alanine 256–phenylalanine 276, and tyrosine 316–isoleucine 336. Residues aspartate 453–histidine 484 are disordered.

The protein belongs to the cation diffusion facilitator (CDF) transporter (TC 2.A.4) family. SLC30A subfamily.

Its subcellular location is the mitochondrion membrane. In terms of biological role, mitochondrial metal transporter involved in mitochondrial iron accumulation. The polypeptide is Mitochondrial metal transporter 2 (MMT2) (Saccharomyces cerevisiae (strain ATCC 204508 / S288c) (Baker's yeast)).